We begin with the raw amino-acid sequence, 337 residues long: MRFKGLDLNLLVVLDSLMTARNLTAAARSINLSQPAMSAAVARLRAYFGDELFTMRGRTLVPTPRAESLASPVRKALLDIQLSIIARDKFNPAESCRRFRISLSDCVTLIFFRQIVDRVARDAPAVSFELLPLREDHDELLRRGEIDFLIMPEPFMSSAHPRAALFGERLVCAGCRTNKRLPHRLTFEEYMSLGQVAVRWNLAHNPSIEEQFLLQHGLKRRIDIVVQSFCMIPPMLSGTDRIGVMPLRLVKHFEKVTPLRIVDLPLSLPAFTEAVQWPAFHNADPASIWMREILLQESSRMGSWGEERQTVKSLLSSNLRSDPLCIKASQLAEPRSS.

Residues 6–63 (LDLNLLVVLDSLMTARNLTAAARSINLSQPAMSAAVARLRAYFGDELFTMRGRTLVPT) enclose the HTH lysR-type domain. A DNA-binding region (H-T-H motif) is located at residues 23-42 (LTAAARSINLSQPAMSAAVA).

It belongs to the LysR transcriptional regulatory family.

NodD regulates the expression of the nodABCFE genes which encode other nodulation proteins. NodD is also a negative regulator of its own expression. Binds flavonoids as inducers. This is Nodulation protein D 2 (nodD2) from Bradyrhizobium sp. (strain NC92).